A 392-amino-acid polypeptide reads, in one-letter code: Galactokinase (392 aa).

33 to 36 (EHTD) is a binding site for substrate. Residues serine 67 and 129-135 (GSGLSSS) each bind ATP. Mg(2+) contacts are provided by serine 135 and glutamate 167. The active-site Proton acceptor is the aspartate 179. Residue tyrosine 229 participates in substrate binding.

The protein belongs to the GHMP kinase family. GalK subfamily.

The protein resides in the cytoplasm. It carries out the reaction alpha-D-galactose + ATP = alpha-D-galactose 1-phosphate + ADP + H(+). The protein operates within carbohydrate metabolism; galactose metabolism. Functionally, catalyzes the transfer of the gamma-phosphate of ATP to D-galactose to form alpha-D-galactose-1-phosphate (Gal-1-P). This chain is Galactokinase, found in Limosilactobacillus reuteri (strain DSM 20016) (Lactobacillus reuteri).